A 60-amino-acid polypeptide reads, in one-letter code: Conotoxin PnMRCL-022 (60 aa).

The first 22 residues, 1-22, serve as a signal peptide directing secretion; that stretch reads MRCLPVFVILLLLIASTPSVNA. Positions 23-45 are excised as a propeptide; it reads RPKTKDLASFHDNAKRTQHIFWS.

The protein belongs to the conotoxin T superfamily. In terms of processing, contains 2 disulfide bonds that can be either 'C1-C3, C2-C4' or 'C1-C4, C2-C3', since these disulfide connectivities have been observed for conotoxins with cysteine framework V (for examples, see AC P0DQQ7 and AC P81755). As to expression, expressed by the venom duct.

The protein localises to the secreted. The chain is Conotoxin PnMRCL-022 from Conus pennaceus (Feathered cone).